The primary structure comprises 395 residues: Tyrosine--tRNA ligase (395 aa).

Residues 42-51 (PTAPDIHLGH) carry the 'HIGH' region motif. The 'KMSKS' region signature appears at 226 to 230 (KMSKS). Lys-229 contacts ATP. The S4 RNA-binding domain maps to 334–394 (IAISNLLKDA…GKRKFARITL (61 aa)).

It belongs to the class-I aminoacyl-tRNA synthetase family. TyrS type 2 subfamily. As to quaternary structure, homodimer.

Its subcellular location is the cytoplasm. It catalyses the reaction tRNA(Tyr) + L-tyrosine + ATP = L-tyrosyl-tRNA(Tyr) + AMP + diphosphate + H(+). In terms of biological role, catalyzes the attachment of tyrosine to tRNA(Tyr) in a two-step reaction: tyrosine is first activated by ATP to form Tyr-AMP and then transferred to the acceptor end of tRNA(Tyr). This Photobacterium profundum (strain SS9) protein is Tyrosine--tRNA ligase.